The sequence spans 269 residues: MNRIHAVILDWAGTTVDFGSFAPTQIFVEAFRQAFDVEITLAEARVPMGLGKWQHIEALGKLPTVDARWQAKFGRAMSAADIDAIYAAFMPLQIAKVVDFSSPIAGVIDTIATLRAEGIKIGSCSGYPRAVMERLVPAAAEHGYRPDHWVATDDLVAGGRPGPWMALQNVIALGIDAVAHCVKVDDAAPGISEGLNAGMWTVGLAVSGNEFGATWDAYQTMSKEDVAVRREHAASKLYAAGAHYVVDSLADLPEVIAHINARLAQGERP.

The Nucleophile role is filled by D10. Residues D10 and A12 each coordinate Mg(2+). Residue K52 is the Schiff-base intermediate with substrate of the active site. Position 186 (D186) interacts with Mg(2+).

Belongs to the HAD-like hydrolase superfamily. PhnX family. In terms of assembly, homodimer. It depends on Mg(2+) as a cofactor.

It carries out the reaction phosphonoacetaldehyde + H2O = acetaldehyde + phosphate + H(+). Functionally, involved in phosphonate degradation. This is Phosphonoacetaldehyde hydrolase from Salmonella typhi.